The following is a 625-amino-acid chain: Basic helix-loop-helix ARNT-like protein 1 (625 aa).

A disordered region spans residues 1-60 (MADQRMDISSTISDFMSPGPTDLLSSSLGTSGVDCNRKRKGSSTDYQESMDTDKDDPHGR). Residue Ser17 is modified to Phosphoserine; by GSK3-beta. Residues 17–32 (SPGPTDLLSSSLGTSG) are compositionally biased toward low complexity. Thr21 carries the phosphothreonine; by GSK3-beta modification. The short motif at 36–41 (NRKRKG) is the Nuclear localization signal element. A compositionally biased stretch (basic and acidic residues) spans 51–60 (DTDKDDPHGR). The bHLH domain maps to 72–125 (NAREAHSQIEKRRRDKMNSFIDELASLVPTCNAMSRKLDKLTVLRMAVQHMKTL). Ser78 is subject to Phosphoserine. The residue at position 90 (Ser90) is a Phosphoserine; by CK2. The short motif at 142 to 152 (LSDDELKHLIL) is the Nuclear export signal 1 element. A PAS 1 domain is found at 143-215 (SDDELKHLIL…EQLSSSDTAP (73 aa)). Lys252 is covalently cross-linked (Glycyl lysine isopeptide (Lys-Gly) (interchain with G-Cter in SUMO2 and SUMO3)). Lys259 is covalently cross-linked (Glycyl lysine isopeptide (Lys-Gly) (interchain with G-Cter in SUMO); alternate). Residue Lys259 forms a Glycyl lysine isopeptide (Lys-Gly) (interchain with G-Cter in SUMO2); alternate linkage. The PAS 2 domain occupies 325–395 (PQPVNGEIRV…ECHRQVLQTR (71 aa)). Positions 360–368 (LAYLPQELL) match the Nuclear export signal 2 motif. The PAC domain occupies 400–443 (TNCYKFKIKDGSFITLRSRWFSFMNPWTKEVEYIVSTNTVVLAN). Disordered regions lie at residues 454-491 (QLTASPRSMDSMLPSGEGGPKRTHPTVPGIPGGTRAGA) and 510-594 (GSSP…SPSN). Residues 507-587 (RIRGSSPSSC…IGIDMIDNDQ (81 aa)) form an interaction with CIART region. Over residues 510-520 (GSSPSSCGSSP) the composition is skewed to low complexity. The residue at position 537 (Lys537) is an N6-acetyllysine.

As to quaternary structure, component of the circadian clock oscillator which includes the CRY1/2 proteins, CLOCK or NPAS2, BMAL1 or BMAL2, CSNK1D and/or CSNK1E, TIMELESS and the PER1/2/3 proteins. Forms a heterodimer with CLOCK. The CLOCK-BMAL1 heterodimer is required for E-box-dependent transactivation, for CLOCK nuclear translocation and degradation, and, for phosphorylation of both CLOCK and BMAL1. Part of a nuclear complex which also includes RACK1 and PRKCA; RACK1 and PRKCA are recruited to the complex in a circadian manner. Interacts with NPAS2. Interacts with EZH2. Interacts with SUMO3. Interacts with SIRT1. Interacts with AHR. Interacts with ID1, ID2 and ID3. Interacts with DDX4. Interacts with OGT. Interacts with EED and SUZ12. Interacts with MTA1. Interacts with CIART. Interacts with HSP90. Interacts with KAT2B and EP300. Interacts with BHLHE40/DEC1 and BHLHE41/DEC2. Interacts with RELB and the interaction is enhanced in the presence of CLOCK. Interacts with PER1, PER2, CRY1 and CRY2 and this interaction requires a translocation to the nucleus. Interaction of the CLOCK-BMAL1 heterodimer with PER or CRY inhibits transcription activation. Interaction of the CLOCK-BMAL1 with CRY1 is independent of DNA but with PER2 is off DNA. The CLOCK-BMAL1 heterodimer interacts with GSK3B. Interacts with KDM5A. Interacts with KMT2A; in a circadian manner. Interacts with UBE3A. Interacts with PRKCG. Interacts with MAGEL2. Interacts with NCOA2. Interacts with THRAP3. The CLOCK-BMAL1 heterodimer interacts with PASD1. Interacts with PASD1. Interacts with USP9X. Interacts with PIWIL2 (via PIWI domain). Interacts with HDAC3. Interacts with HNF4A. Ubiquitinated, leading to its proteasomal degradation. Deubiquitinated by USP9X. Post-translationally, O-glycosylated; contains O-GlcNAc. O-glycosylation by OGT prevents protein degradation by inhibiting ubiquitination. It also stabilizes the CLOCK-BMAL1 heterodimer thereby increasing CLOCK-BMAL1-mediated transcription of genes in the negative loop of the circadian clock such as PER1/2/3 and CRY1/2. In terms of processing, acetylated on Lys-537 by CLOCK during the repression phase of the circadian cycle. Acetylation facilitates recruitment of CRY1 protein and initiates the repression phase of the circadian cycle. Acetylated at Lys-537 by KAT5 during the activation phase of the cycle, leading to recruitment of the positive transcription elongation factor b (P-TEFb) and BRD4, followed by productive elongation of circadian transcripts. Deacetylated by SIRT1, which may result in decreased protein stability. Phosphorylated upon dimerization with CLOCK. Phosphorylation enhances the transcriptional activity, alters the subcellular localization and decreases the stability of the CLOCK-BMAL1 heterodimer by promoting its degradation. Phosphorylation shows circadian variations in the liver with a peak between CT10 to CT14. Phosphorylation at Ser-90 by CK2 is essential for its nuclear localization, its interaction with CLOCK and controls CLOCK nuclear entry. Dephosphorylation at Ser-78 is important for dimerization with CLOCK and transcriptional activity. Post-translationally, sumoylated on Lys-259 upon dimerization with CLOCK. Predominantly conjugated to poly-SUMO2/3 rather than SUMO1 and the level of these conjugates undergo rhythmic variation, peaking at CT9-CT12. Sumoylation localizes it exclusively to the PML body and promotes its ubiquitination in the PML body, ubiquitin-dependent proteasomal degradation and the transcriptional activity of the CLOCK-BMAL1 heterodimer. In terms of processing, undergoes lysosome-mediated degradation in a time-dependent manner in the liver.

The protein resides in the nucleus. It localises to the cytoplasm. Its subcellular location is the PML body. Functionally, transcriptional activator which forms a core component of the circadian clock. The circadian clock, an internal time-keeping system, regulates various physiological processes through the generation of approximately 24 hour circadian rhythms in gene expression, which are translated into rhythms in metabolism and behavior. It is derived from the Latin roots 'circa' (about) and 'diem' (day) and acts as an important regulator of a wide array of physiological functions including metabolism, sleep, body temperature, blood pressure, endocrine, immune, cardiovascular, and renal function. Consists of two major components: the central clock, residing in the suprachiasmatic nucleus (SCN) of the brain, and the peripheral clocks that are present in nearly every tissue and organ system. Both the central and peripheral clocks can be reset by environmental cues, also known as Zeitgebers (German for 'timegivers'). The predominant Zeitgeber for the central clock is light, which is sensed by retina and signals directly to the SCN. The central clock entrains the peripheral clocks through neuronal and hormonal signals, body temperature and feeding-related cues, aligning all clocks with the external light/dark cycle. Circadian rhythms allow an organism to achieve temporal homeostasis with its environment at the molecular level by regulating gene expression to create a peak of protein expression once every 24 hours to control when a particular physiological process is most active with respect to the solar day. Transcription and translation of core clock components (CLOCK, NPAS2, BMAL1, BMAL2, PER1, PER2, PER3, CRY1 and CRY2) plays a critical role in rhythm generation, whereas delays imposed by post-translational modifications (PTMs) are important for determining the period (tau) of the rhythms (tau refers to the period of a rhythm and is the length, in time, of one complete cycle). A diurnal rhythm is synchronized with the day/night cycle, while the ultradian and infradian rhythms have a period shorter and longer than 24 hours, respectively. Disruptions in the circadian rhythms contribute to the pathology of cardiovascular diseases, cancer, metabolic syndromes and aging. A transcription/translation feedback loop (TTFL) forms the core of the molecular circadian clock mechanism. Transcription factors, CLOCK or NPAS2 and BMAL1 or BMAL2, form the positive limb of the feedback loop, act in the form of a heterodimer and activate the transcription of core clock genes and clock-controlled genes (involved in key metabolic processes), harboring E-box elements (5'-CACGTG-3') within their promoters. The core clock genes: PER1/2/3 and CRY1/2 which are transcriptional repressors form the negative limb of the feedback loop and interact with the CLOCK|NPAS2-BMAL1|BMAL2 heterodimer inhibiting its activity and thereby negatively regulating their own expression. This heterodimer also activates nuclear receptors NR1D1/2 and RORA/B/G, which form a second feedback loop and which activate and repress BMAL1 transcription, respectively. BMAL1 positively regulates myogenesis and negatively regulates adipogenesis via the transcriptional control of the genes of the canonical Wnt signaling pathway. Plays a role in normal pancreatic beta-cell function; regulates glucose-stimulated insulin secretion via the regulation of antioxidant genes NFE2L2/NRF2 and its targets SESN2, PRDX3, CCLC and CCLM. Negatively regulates the mTORC1 signaling pathway; regulates the expression of MTOR and DEPTOR. Controls diurnal oscillations of Ly6C inflammatory monocytes; rhythmic recruitment of the PRC2 complex imparts diurnal variation to chemokine expression that is necessary to sustain Ly6C monocyte rhythms. Regulates the expression of HSD3B2, STAR, PTGS2, CYP11A1, CYP19A1 and LHCGR in the ovary and also the genes involved in hair growth. Plays an important role in adult hippocampal neurogenesis by regulating the timely entry of neural stem/progenitor cells (NSPCs) into the cell cycle and the number of cell divisions that take place prior to cell-cycle exit. Regulates the circadian expression of CIART and KLF11. The CLOCK-BMAL1 heterodimer regulates the circadian expression of SERPINE1/PAI1, VWF, B3, CCRN4L/NOC, NAMPT, DBP, MYOD1, PPARGC1A, PPARGC1B, SIRT1, GYS2, F7, NGFR, GNRHR, BHLHE40/DEC1, ATF4, MTA1, KLF10 and also genes implicated in glucose and lipid metabolism. Promotes rhythmic chromatin opening, regulating the DNA accessibility of other transcription factors. The NPAS2-BMAL1 heterodimer positively regulates the expression of MAOA, F7 and LDHA and modulates the circadian rhythm of daytime contrast sensitivity by regulating the rhythmic expression of adenylate cyclase type 1 (ADCY1) in the retina. The preferred binding motif for the CLOCK-BMAL1 heterodimer is 5'-CACGTGA-3', which contains a flanking adenine nucleotide at the 3-prime end of the canonical 6-nucleotide E-box sequence. CLOCK specifically binds to the half-site 5'-CAC-3', while BMAL1 binds to the half-site 5'-GTGA-3'. The CLOCK-BMAL1 heterodimer also recognizes the non-canonical E-box motifs 5'-AACGTGA-3' and 5'-CATGTGA-3'. Essential for the rhythmic interaction of CLOCK with ASS1 and plays a critical role in positively regulating CLOCK-mediated acetylation of ASS1. Plays a role in protecting against lethal sepsis by limiting the expression of immune checkpoint protein CD274 in macrophages in a PKM2-dependent manner. Regulates the diurnal rhythms of skeletal muscle metabolism via transcriptional activation of genes promoting triglyceride synthesis (DGAT2) and metabolic efficiency (COQ10B). The chain is Basic helix-loop-helix ARNT-like protein 1 (BMAL1) from Pongo abelii (Sumatran orangutan).